A 213-amino-acid polypeptide reads, in one-letter code: Thiopurine S-methyltransferase (213 aa).

S-adenosyl-L-methionine contacts are provided by tryptophan 10, leucine 45, glutamate 66, and arginine 121.

It belongs to the class I-like SAM-binding methyltransferase superfamily. TPMT family.

The protein resides in the cytoplasm. The catalysed reaction is S-adenosyl-L-methionine + a thiopurine = S-adenosyl-L-homocysteine + a thiopurine S-methylether.. This Aliivibrio salmonicida (strain LFI1238) (Vibrio salmonicida (strain LFI1238)) protein is Thiopurine S-methyltransferase.